The primary structure comprises 429 residues: 3-phosphoshikimate 1-carboxyvinyltransferase (429 aa).

3-phosphoshikimate-binding residues include Lys-23, Ser-24, and Arg-28. Lys-23 contributes to the phosphoenolpyruvate binding site. Gly-95 and Arg-123 together coordinate phosphoenolpyruvate. 4 residues coordinate 3-phosphoshikimate: Ser-168, Gln-170, Asp-316, and Lys-343. Gln-170 is a binding site for phosphoenolpyruvate. Asp-316 serves as the catalytic Proton acceptor. Residues Arg-347 and Arg-389 each contribute to the phosphoenolpyruvate site.

It belongs to the EPSP synthase family. Monomer.

It is found in the cytoplasm. The enzyme catalyses 3-phosphoshikimate + phosphoenolpyruvate = 5-O-(1-carboxyvinyl)-3-phosphoshikimate + phosphate. The protein operates within metabolic intermediate biosynthesis; chorismate biosynthesis; chorismate from D-erythrose 4-phosphate and phosphoenolpyruvate: step 6/7. Functionally, catalyzes the transfer of the enolpyruvyl moiety of phosphoenolpyruvate (PEP) to the 5-hydroxyl of shikimate-3-phosphate (S3P) to produce enolpyruvyl shikimate-3-phosphate and inorganic phosphate. This Bacillus cereus (strain AH187) protein is 3-phosphoshikimate 1-carboxyvinyltransferase.